A 54-amino-acid chain; its full sequence is Pars intercerebralis major peptide D1 (54 aa).

This sequence belongs to the granulin family. Post-translationally, six disulfide bonds are present. As to expression, brain.

Its subcellular location is the secreted. The sequence is that of Pars intercerebralis major peptide D1 from Locusta migratoria (Migratory locust).